A 376-amino-acid chain; its full sequence is Succinyl-diaminopimelate desuccinylase (376 aa).

His-66 contacts Zn(2+). Asp-68 is a catalytic residue. Asp-99 serves as a coordination point for Zn(2+). Glu-133 acts as the Proton acceptor in catalysis. Zn(2+)-binding residues include Glu-134, Glu-162, and His-348.

It belongs to the peptidase M20A family. DapE subfamily. Homodimer. Zn(2+) is required as a cofactor. Requires Co(2+) as cofactor.

It carries out the reaction N-succinyl-(2S,6S)-2,6-diaminopimelate + H2O = (2S,6S)-2,6-diaminopimelate + succinate. Its pathway is amino-acid biosynthesis; L-lysine biosynthesis via DAP pathway; LL-2,6-diaminopimelate from (S)-tetrahydrodipicolinate (succinylase route): step 3/3. Catalyzes the hydrolysis of N-succinyl-L,L-diaminopimelic acid (SDAP), forming succinate and LL-2,6-diaminopimelate (DAP), an intermediate involved in the bacterial biosynthesis of lysine and meso-diaminopimelic acid, an essential component of bacterial cell walls. The protein is Succinyl-diaminopimelate desuccinylase of Xanthomonas oryzae pv. oryzae (strain PXO99A).